The chain runs to 540 residues: Glucose-6-phosphate isomerase (540 aa).

E350 (proton donor) is an active-site residue. Active-site residues include H381 and K503.

It belongs to the GPI family.

The protein resides in the cytoplasm. It catalyses the reaction alpha-D-glucose 6-phosphate = beta-D-fructose 6-phosphate. It participates in carbohydrate biosynthesis; gluconeogenesis. The protein operates within carbohydrate degradation; glycolysis; D-glyceraldehyde 3-phosphate and glycerone phosphate from D-glucose: step 2/4. Functionally, catalyzes the reversible isomerization of glucose-6-phosphate to fructose-6-phosphate. This Burkholderia pseudomallei (strain 668) protein is Glucose-6-phosphate isomerase.